A 463-amino-acid chain; its full sequence is Cysteine--tRNA ligase (463 aa).

Cys-28 serves as a coordination point for Zn(2+). Positions 30 to 40 (ITPYDLCHIGH) match the 'HIGH' region motif. Zn(2+) contacts are provided by Cys-211, His-236, and Glu-240. The 'KMSKS' region signature appears at 268 to 272 (KMSKS). Lys-271 serves as a coordination point for ATP.

Belongs to the class-I aminoacyl-tRNA synthetase family. As to quaternary structure, monomer. Zn(2+) is required as a cofactor.

It localises to the cytoplasm. It catalyses the reaction tRNA(Cys) + L-cysteine + ATP = L-cysteinyl-tRNA(Cys) + AMP + diphosphate. The sequence is that of Cysteine--tRNA ligase from Wigglesworthia glossinidia brevipalpis.